The primary structure comprises 152 residues: MASLEDGTYRLRAVTTSNPDPGVGGEYATVEGARQPVKAEPSTPPFFERQIWQVTRNSDGQSTIKYQGLNAPFEYGFSYDQLEQNAPVIAGDPKEYILQLVPSTTDVYIIRAPIQRVGVDVEVGVQGNNLVYKFFPVDGSGGDRPAWRFTRE.

As to quaternary structure, homodimer.

Its function is as follows. Binds and inhibits cysteine proteinases. Inhibits most strongly papain and cathepsin L, more weakly bromelain and cathepsin B while it is completely ineffective against cathepsin H. The chain is Clitocypin-5 (clt5) from Clitocybe nebularis (Clouded agaric).